We begin with the raw amino-acid sequence, 209 residues long: FMN-dependent NADH:quinone oxidoreductase (209 aa).

FMN contacts are provided by residues serine 9 and 15–17; that span reads SNS.

It belongs to the azoreductase type 1 family. As to quaternary structure, homodimer. FMN serves as cofactor.

It catalyses the reaction 2 a quinone + NADH + H(+) = 2 a 1,4-benzosemiquinone + NAD(+). The catalysed reaction is N,N-dimethyl-1,4-phenylenediamine + anthranilate + 2 NAD(+) = 2-(4-dimethylaminophenyl)diazenylbenzoate + 2 NADH + 2 H(+). Functionally, quinone reductase that provides resistance to thiol-specific stress caused by electrophilic quinones. In terms of biological role, also exhibits azoreductase activity. Catalyzes the reductive cleavage of the azo bond in aromatic azo compounds to the corresponding amines. The polypeptide is FMN-dependent NADH:quinone oxidoreductase (Bordetella bronchiseptica (strain ATCC BAA-588 / NCTC 13252 / RB50) (Alcaligenes bronchisepticus)).